The following is a 208-amino-acid chain: MIFPCLFQSMLNLYAEALSTFSLLFEEAKSSSEIEPDAMMLATASLEGHPSVRTVLLKKFDARGFVFYSHIDSPKGRDLQANPQAALLFLWRSLREAGVQVRIEGRVQQVLAEEADAYFASRPRQSQIGAWASMQSCPLGSPEEFQARLAEVKATFEGRDVPRPEGWVGFRVAPRVLEFWYGARFRLHERWRYEVDAAGYWRKFLLYP.

Residues 53-58 (RTVLLK), 68-69 (YS), Lys75, and Gln100 each bind FMN. Residue Lys58 participates in substrate binding. Substrate-binding residues include Tyr118, Arg122, and Ser126. FMN-binding positions include 135 to 136 (QS) and Trp180. Position 186 to 188 (186 to 188 (RLH)) interacts with substrate. Arg190 provides a ligand contact to FMN.

It belongs to the pyridoxamine 5'-phosphate oxidase family. Homodimer. FMN serves as cofactor.

It catalyses the reaction pyridoxamine 5'-phosphate + O2 + H2O = pyridoxal 5'-phosphate + H2O2 + NH4(+). The catalysed reaction is pyridoxine 5'-phosphate + O2 = pyridoxal 5'-phosphate + H2O2. It functions in the pathway cofactor metabolism; pyridoxal 5'-phosphate salvage; pyridoxal 5'-phosphate from pyridoxamine 5'-phosphate: step 1/1. The protein operates within cofactor metabolism; pyridoxal 5'-phosphate salvage; pyridoxal 5'-phosphate from pyridoxine 5'-phosphate: step 1/1. Functionally, catalyzes the oxidation of either pyridoxine 5'-phosphate (PNP) or pyridoxamine 5'-phosphate (PMP) into pyridoxal 5'-phosphate (PLP). The polypeptide is Pyridoxine/pyridoxamine 5'-phosphate oxidase (Xylella fastidiosa (strain 9a5c)).